The primary structure comprises 308 residues: E3 ubiquitin-protein ligase SINAT2 (308 aa).

The RING-type zinc finger occupies 60 to 96; that stretch reads CPVCTNLMYPPIHQCPNGHTLCSNCKLRVQNTCPTCR. The segment at 110–303 is SBD; that stretch reads VAESLEVPCR…QELKLRVTGR (194 aa). An SIAH-type zinc finger spans residues 113-173; the sequence is SLEVPCRYQN…LVVHLKDDHK (61 aa). Zn(2+) is bound by residues Cys-118, Cys-125, His-137, Cys-141, Cys-148, Cys-155, His-167, and His-172.

Belongs to the SINA (Seven in absentia) family. As to quaternary structure, interacts with RAP2-2. Interacts with SINAT6. Interacts with ATG6 and TRAF1A. Interacts with WAV3. Interacts with FREE1. Interacts with ELC/VPS23A.

Its subcellular location is the endosome. It is found in the multivesicular body. The protein resides in the cytoplasmic vesicle. The protein localises to the autophagosome. The catalysed reaction is S-ubiquitinyl-[E2 ubiquitin-conjugating enzyme]-L-cysteine + [acceptor protein]-L-lysine = [E2 ubiquitin-conjugating enzyme]-L-cysteine + N(6)-ubiquitinyl-[acceptor protein]-L-lysine.. It functions in the pathway protein modification; protein ubiquitination. E3 ubiquitin-protein ligase that mediates ubiquitination and subsequent proteasomal degradation of target proteins. E3 ubiquitin ligases accept ubiquitin from an E2 ubiquitin-conjugating enzyme in the form of a thioester and then directly transfers the ubiquitin to targeted substrates. It probably triggers the ubiquitin-mediated degradation of different substrates. Mediates the proteasomal-dependent degradation of ATG6, a component of the autophagosome complex. Requires TRAF1A/MUSE14 and TRAF1B/MUSE13 to target ATG6 for ubiquitination and subsequent regulation of autophagosome assembly. Modulates directly the ubiquitination and proteasomal-dependent degradation of FREE1, a component of the ESCRT-I complex. Modulates directly the ubiquitination and proteasomal-dependent degradation of ELC/VPS23A, a component of the ESCRT-I complex. The polypeptide is E3 ubiquitin-protein ligase SINAT2 (Arabidopsis thaliana (Mouse-ear cress)).